The following is a 316-amino-acid chain: tRNA dimethylallyltransferase (316 aa).

17-24 lines the ATP pocket; it reads GPTASGKT. Residue 19–24 coordinates substrate; the sequence is TASGKT. 3 interaction with substrate tRNA regions span residues 42-45, 166-170, and 247-252; these read DSAL, QRLSR, and RCVGYR.

The protein belongs to the IPP transferase family. As to quaternary structure, monomer. Mg(2+) serves as cofactor.

The catalysed reaction is adenosine(37) in tRNA + dimethylallyl diphosphate = N(6)-dimethylallyladenosine(37) in tRNA + diphosphate. Functionally, catalyzes the transfer of a dimethylallyl group onto the adenine at position 37 in tRNAs that read codons beginning with uridine, leading to the formation of N6-(dimethylallyl)adenosine (i(6)A). This chain is tRNA dimethylallyltransferase, found in Salmonella enteritidis PT4 (strain P125109).